The primary structure comprises 287 residues: MKDRLAELLDLSKQYDQQFPDGDDEFDSPHEDIVFETDHILESLYRDIRDIQDENQLLVADVKRLGKQNARFLTSMRRLSSIKRDTNSIAKAIKARGEVIHCKLRAMKELSEAAEAQHGPHSAVARISRAQYNALTLTFQRAMHDYNQAEMKQRDNCKIRIQRQLEIMGKEVSGDQIEDMFEQGKWDVFSENLLADVKGARAALNEIESRHRELLRLESRIRDVHELFLQMAVLVEKQADTLNVIELNVQKTVDYTGQAKAQVRKAVQYEEKNPCRTLCCFCCPCLK.

The stretch at 41–71 (LESLYRDIRDIQDENQLLVADVKRLGKQNAR) forms a coiled coil. Residues 204 to 266 (LNEIESRHRE…GQAKAQVRKA (63 aa)) enclose the t-SNARE coiled-coil homology domain.

It belongs to the syntaxin family. Interacts with the SNARE proteins SNAP-23 and VAMP.

Its subcellular location is the membrane. The protein resides in the golgi apparatus. The protein localises to the trans-Golgi network membrane. Its function is as follows. SNARE that acts to regulate protein transport between late endosomes and the trans-Golgi network. The polypeptide is Syntaxin-11 (STX11) (Homo sapiens (Human)).